A 383-amino-acid polypeptide reads, in one-letter code: Na(+)/H(+) antiporter NhaA (383 aa).

The next 11 helical transmembrane spans lie at 14 to 34 (AGGI…NSPL), 47 to 67 (FGMS…FLLI), 87 to 107 (IFPA…YVAF), 117 to 137 (GWAI…ALLG), 146 to 166 (VFLL…IALF), 171 to 191 (LSSM…MLNA), 205 to 225 (AILW…GVVI), 252 to 272 (VAFG…LEGV), 280 to 300 (MLPL…IFSF), 321 to 341 (IFAV…ISSL), and 356 to 376 (LGIL…LHFS).

The protein belongs to the NhaA Na(+)/H(+) (TC 2.A.33) antiporter family.

It is found in the cell inner membrane. The enzyme catalyses Na(+)(in) + 2 H(+)(out) = Na(+)(out) + 2 H(+)(in). It catalyses the reaction Li(+)(in) + 2 H(+)(out) = Li(+)(out) + 2 H(+)(in). Activity is regulated by pH. Active at alkaline pH. Amiloride strongly reduces affinity for Na(+), but does not change the Vmax. Its function is as follows. Na(+)/H(+) antiporter that extrudes sodium in exchange for external protons. Can also transport lithium and potassium. In Vibrio parahaemolyticus serotype O3:K6 (strain RIMD 2210633), this protein is Na(+)/H(+) antiporter NhaA.